The following is a 357-amino-acid chain: Guanine nucleotide-binding protein alpha-1 subunit (357 aa).

G2 carries N-myristoyl glycine lipidation. C4 carries S-palmitoyl cysteine lipidation. The 326-residue stretch at 32–357 (NVIKLLLLGA…SSKLKGCGLF (326 aa)) folds into the G-alpha domain. Positions 35–48 (KLLLLGAGESGKST) are G1 motif. The GTP site is built by E43, S44, G45, K46, S47, T48, D151, L176, T182, G204, N270, K271, D273, and A329. Position 47 (S47) interacts with Mg(2+). Residues 174-182 (DILHTRVPT) form a G2 motif region. Position 182 (T182) interacts with Mg(2+). The G3 motif stretch occupies residues 197–206 (FRVFDVGGQR). The segment at 266–273 (ILFLNKVD) is G4 motif. Positions 327–332 (TCATDT) are G5 motif.

This sequence belongs to the G-alpha family. G(q) subfamily. In terms of assembly, g proteins are composed of 3 units; alpha, beta and gamma. The alpha chain contains the guanine nucleotide binding site. Mg(2+) serves as cofactor.

Functionally, guanine nucleotide-binding proteins (G proteins) are involved as modulators or transducers in various transmembrane signaling systems. This Caenorhabditis briggsae protein is Guanine nucleotide-binding protein alpha-1 subunit (gpa-1).